The primary structure comprises 473 residues: Pyruvate kinase (473 aa).

Residue Arg-32 coordinates substrate. The K(+) site is built by Asn-34, Ser-36, Asp-66, and Thr-67. Asn-34–His-37 is a binding site for ATP. Residues Arg-73 and Lys-155 each coordinate ATP. Glu-221 contributes to the Mg(2+) binding site. Positions 244, 245, and 277 each coordinate substrate. Position 245 (Asp-245) interacts with Mg(2+).

The protein belongs to the pyruvate kinase family. As to quaternary structure, homotetramer. Mg(2+) serves as cofactor. Requires K(+) as cofactor.

The catalysed reaction is pyruvate + ATP = phosphoenolpyruvate + ADP + H(+). It participates in carbohydrate degradation; glycolysis; pyruvate from D-glyceraldehyde 3-phosphate: step 5/5. In Clostridium acetobutylicum (strain ATCC 824 / DSM 792 / JCM 1419 / IAM 19013 / LMG 5710 / NBRC 13948 / NRRL B-527 / VKM B-1787 / 2291 / W), this protein is Pyruvate kinase (pyk).